A 308-amino-acid chain; its full sequence is Pantothenate synthetase (308 aa).

Residue 39–46 (MGALHDGH) participates in ATP binding. The active-site Proton donor is H46. Q71 is a binding site for (R)-pantoate. Q71 contributes to the beta-alanine binding site. 157–160 (GEKD) lines the ATP pocket. Q163 contacts (R)-pantoate. Residues V186 and 194-197 (MSSR) contribute to the ATP site. The disordered stretch occupies residues 286-308 (IETPAGTAGPDGDRQYAQSPWRN).

It belongs to the pantothenate synthetase family. In terms of assembly, homodimer.

The protein resides in the cytoplasm. It carries out the reaction (R)-pantoate + beta-alanine + ATP = (R)-pantothenate + AMP + diphosphate + H(+). It functions in the pathway cofactor biosynthesis; (R)-pantothenate biosynthesis; (R)-pantothenate from (R)-pantoate and beta-alanine: step 1/1. In terms of biological role, catalyzes the condensation of pantoate with beta-alanine in an ATP-dependent reaction via a pantoyl-adenylate intermediate. The chain is Pantothenate synthetase from Mycolicibacterium paratuberculosis (strain ATCC BAA-968 / K-10) (Mycobacterium paratuberculosis).